The sequence spans 311 residues: MVWENQTFNSIFILLGIFNHSPTHTFLFSLVLGIFSLALMENISMVLLIYIEKQLHTPMYFLLSQLSLMDLMLICTTLPKMIFSYLSGKKSISLAGCGTQIFFYVSLLGAECFLLAVMAYDRYVAICHPLQYTILMNPKLCVFMTVASWTLGSLDGIIVLAAVLSFSYCSSLEIHHFFCDVAALLPLSCTETSAFERLLVICCVVMLIFPVSVIILSYSHVLRAVIHMGSGESRRKAFTTCSSHLSVVGLYYGAAMFMYMRPASKHTPDQDKMVSAFYTILTPMLNPLIYSLRNKEVFRALQKVLKKRKLI.

The Extracellular segment spans residues 1-25; it reads MVWENQTFNSIFILLGIFNHSPTHT. An N-linked (GlcNAc...) asparagine glycan is attached at asparagine 5. A helical membrane pass occupies residues 26 to 49; that stretch reads FLFSLVLGIFSLALMENISMVLLI. At 50 to 57 the chain is on the cytoplasmic side; that stretch reads YIEKQLHT. A helical transmembrane segment spans residues 58–79; it reads PMYFLLSQLSLMDLMLICTTLP. At 80–100 the chain is on the extracellular side; sequence KMIFSYLSGKKSISLAGCGTQ. An intrachain disulfide couples cysteine 97 to cysteine 189. The chain crosses the membrane as a helical span at residues 101–120; the sequence is IFFYVSLLGAECFLLAVMAY. The Cytoplasmic portion of the chain corresponds to 121-139; it reads DRYVAICHPLQYTILMNPK. A helical transmembrane segment spans residues 140–158; that stretch reads LCVFMTVASWTLGSLDGII. The Extracellular segment spans residues 159–195; that stretch reads VLAAVLSFSYCSSLEIHHFFCDVAALLPLSCTETSAF. A helical transmembrane segment spans residues 196-219; sequence ERLLVICCVVMLIFPVSVIILSYS. Topologically, residues 220 to 236 are cytoplasmic; the sequence is HVLRAVIHMGSGESRRK. Residues 237 to 259 traverse the membrane as a helical segment; the sequence is AFTTCSSHLSVVGLYYGAAMFMY. At 260-272 the chain is on the extracellular side; the sequence is MRPASKHTPDQDK. The helical transmembrane segment at 273–292 threads the bilayer; that stretch reads MVSAFYTILTPMLNPLIYSL. At 293–311 the chain is on the cytoplasmic side; sequence RNKEVFRALQKVLKKRKLI.

It belongs to the G-protein coupled receptor 1 family.

The protein localises to the cell membrane. Odorant receptor. This chain is Olfactory receptor 2M4 (OR2M4), found in Homo sapiens (Human).